A 476-amino-acid chain; its full sequence is MSMASFKSASKRISGTENVTRISANTAINSIVKKGELNVISLKDGNTADLEGINDVLLDYRRILKNEIKTAVSPITMKLKKDEHKKKLKLGTLKSITDKLRKLGGESSQPFIQFYKVQCMYIPLFSRVDGDNGEITVSLIDDGKEAAGQDPIIQSITFDASQMAMVELSMNFFVEKKDMDFIGIHVSAENVPVQDRAYGSINLAFFTNEQSVPMMQEEKKSSYLMIDAVNRPNDITKSSVFKSIGDRVSEEINQKRDDYKKKLIENEKLRRREGKGVKIETETRSSSSSDGETLLEEARKSVSLNISKFLADQRRAPPPPQLEKRTFQWPCGVKMLTMMDTGSSSHYFFSKNITPTSVEMNFGGVAQLEVERAKLSFETFGNKFLLKDVFMFSDQSLGDNILSYTLLKEEGHIDGMRTAGDDVLLEKDGEVVMILDSRDEGRMWIKDDVWAEVTEHGSKSAREYCMKVEKNEIKVE.

The segment covering 274–283 (GKGVKIETET) has biased composition (basic and acidic residues). Residues 274 to 294 (GKGVKIETETRSSSSSDGETL) are disordered.

This is an uncharacterized protein from Citrus psorosis virus (isolate Spain/P-121) (CPsV).